A 362-amino-acid chain; its full sequence is Peptide chain release factor 1 (362 aa).

N5-methylglutamine is present on Q238.

This sequence belongs to the prokaryotic/mitochondrial release factor family. Post-translationally, methylated by PrmC. Methylation increases the termination efficiency of RF1.

The protein resides in the cytoplasm. In terms of biological role, peptide chain release factor 1 directs the termination of translation in response to the peptide chain termination codons UAG and UAA. This is Peptide chain release factor 1 from Psychrobacter cryohalolentis (strain ATCC BAA-1226 / DSM 17306 / VKM B-2378 / K5).